The sequence spans 355 residues: Phosphoribosylformylglycinamidine cyclo-ligase (355 aa).

The protein belongs to the AIR synthase family.

The protein localises to the cytoplasm. The catalysed reaction is 2-formamido-N(1)-(5-O-phospho-beta-D-ribosyl)acetamidine + ATP = 5-amino-1-(5-phospho-beta-D-ribosyl)imidazole + ADP + phosphate + H(+). It functions in the pathway purine metabolism; IMP biosynthesis via de novo pathway; 5-amino-1-(5-phospho-D-ribosyl)imidazole from N(2)-formyl-N(1)-(5-phospho-D-ribosyl)glycinamide: step 2/2. This chain is Phosphoribosylformylglycinamidine cyclo-ligase, found in Hamiltonella defensa subsp. Acyrthosiphon pisum (strain 5AT).